A 1208-amino-acid chain; its full sequence is Spindle pole body protein pcp1 (1208 aa).

Residues 1–17 show a composition bias toward basic and acidic residues; sequence MSERDFNTQSPKFKDEN. A disordered region spans residues 1-91; the sequence is MSERDFNTQS…DKYNGSLGDK (91 aa). Residues 48-64 show a composition bias toward polar residues; the sequence is NDKSSFQTPLRNGSYQP. 4 coiled-coil regions span residues 151-375, 387-803, 874-1091, and 1177-1204; these read LREQ…KENQ, TDSM…ANIE, GTET…QSTQ, and ERMK…AKAK. Ser906 carries the post-translational modification Phosphoserine.

As to quaternary structure, interacts with ccq1.

The protein resides in the nucleus. It localises to the cytoplasm. It is found in the cytoskeleton. Its subcellular location is the microtubule organizing center. The protein localises to the spindle pole body. In terms of biological role, spindle pole body component that binds calmodulin. Overexpression of pcp1 causes the formation of supernumerary SPB-like structures and disrupts both mitotic spindle assembly and chromosome segregation. This Schizosaccharomyces pombe (strain 972 / ATCC 24843) (Fission yeast) protein is Spindle pole body protein pcp1 (pcp1).